Consider the following 71-residue polypeptide: Ceratotoxin-A (71 aa).

Positions 1-23 are cleaved as a signal peptide; sequence MANLKAVFLICIVAFIALQCVVA. 2 propeptides span residues 24-35 and 65-71; these read EPAAEDSVVVKR and VAAGLVG.

In terms of assembly, homomer of four to six subunits.

It localises to the secreted. In terms of biological role, female-specific peptides with potent activity against Gram-positive and Gram-negative bacteria. They have as well hemolytic activity. The polypeptide is Ceratotoxin-A (CTXA1) (Ceratitis capitata (Mediterranean fruit fly)).